A 230-amino-acid polypeptide reads, in one-letter code: uncharacterized protein (230 aa).

Disordered stretches follow at residues 63–90 (TDCQ…KKTI) and 194–230 (KKLE…YKEH). The span at 194–217 (KKLEEREQMDKHPQDRDNKDKEVN) shows a compositional bias: basic and acidic residues.

This is an uncharacterized protein from Caenorhabditis elegans.